Reading from the N-terminus, the 241-residue chain is DnaA regulatory inactivator Hda (241 aa).

Belongs to the DnaA family. HdA subfamily. In terms of assembly, the active form seems to be an ADP-bound monomer. Forms the RIDA complex (regulatory inactivation of DnaA) of ATP-DnaA, ADP-Hda and the DNA-loaded beta sliding clamp (dnaN).

Mediates the interaction of DNA replication initiator protein DnaA with DNA polymerase subunit beta sliding clamp (dnaN). Stimulates hydrolysis of ATP-DnaA to ADP-DnaA, rendering DnaA inactive for reinitiation, a process called regulatory inhibition of DnaA or RIDA. This Salmonella paratyphi A (strain ATCC 9150 / SARB42) protein is DnaA regulatory inactivator Hda.